The following is a 509-amino-acid chain: Aspartyl/glutamyl-tRNA(Asn/Gln) amidotransferase subunit B (509 aa).

Belongs to the GatB/GatE family. GatB subfamily. Heterotrimer of A, B and C subunits.

The catalysed reaction is L-glutamyl-tRNA(Gln) + L-glutamine + ATP + H2O = L-glutaminyl-tRNA(Gln) + L-glutamate + ADP + phosphate + H(+). It catalyses the reaction L-aspartyl-tRNA(Asn) + L-glutamine + ATP + H2O = L-asparaginyl-tRNA(Asn) + L-glutamate + ADP + phosphate + 2 H(+). In terms of biological role, allows the formation of correctly charged Asn-tRNA(Asn) or Gln-tRNA(Gln) through the transamidation of misacylated Asp-tRNA(Asn) or Glu-tRNA(Gln) in organisms which lack either or both of asparaginyl-tRNA or glutaminyl-tRNA synthetases. The reaction takes place in the presence of glutamine and ATP through an activated phospho-Asp-tRNA(Asn) or phospho-Glu-tRNA(Gln). The polypeptide is Aspartyl/glutamyl-tRNA(Asn/Gln) amidotransferase subunit B (Psychrobacter cryohalolentis (strain ATCC BAA-1226 / DSM 17306 / VKM B-2378 / K5)).